Consider the following 337-residue polypeptide: HTH-type transcriptional regulator MalR (337 aa).

In terms of domain architecture, HTH lacI-type spans 1–56 (MVTIKDIAQAANVSTSTVSRVISGNPRISMQTREKVKATMKSFNYQPNRAARTLAT). The segment at residues 4–23 (IKDIAQAANVSTSTVSRVIS) is a DNA-binding region (H-T-H motif).

Its function is as follows. Transcriptional repressor of the malA gene for maltase. This chain is HTH-type transcriptional regulator MalR (malR), found in Staphylococcus xylosus.